A 484-amino-acid polypeptide reads, in one-letter code: Legumin type B (484 aa).

The first 22 residues, 1–22, serve as a signal peptide directing secretion; it reads MSKPFLSLLSLSLLLFTSTCLA. Cystine bridges form between cysteine 33–cysteine 66 and cysteine 109–cysteine 310. Residues 38-257 form the Cupin type-1 1 domain; sequence INALEPDHRV…TFNTEEDTAK (220 aa). Disordered stretches follow at residues 109–141, 196–236, and 275–304; these read CPQTYQEPRSSQSRQGSRQQQPDSHQKIRRFRK, PETQ…GNSV, and GLRIINPEGQQEEEEEEEEEKQRSEQGRNG. Low complexity predominate over residues 117-129; sequence RSSQSRQGSRQQQ. The segment covering 284 to 293 has biased composition (acidic residues); sequence QQEEEEEEEE. One can recognise a Cupin type-1 2 domain in the interval 316-463; sequence ENIAQPARAD…AFGLRQRQVT (148 aa).

The protein belongs to the 11S seed storage protein (globulins) family. Hexamer; each subunit is composed of an acidic and a basic chain derived from a single precursor and linked by a disulfide bond.

In terms of biological role, this protein found in the seeds of many leguminous and non-leguminous plants is the source of sulfur-containing amino acids in seed meals. The polypeptide is Legumin type B (LEB4) (Vicia faba (Broad bean)).